The primary structure comprises 284 residues: MKIPRGIKIILRWVVTLYIYGFILYQITPFSYFETYIPEERLAPKPYVERIFYLFGVKSNEYPSKEVLEFLKSMDVDLVYGFFPFEDYGIFKNSLKAPECHLIYTSEISTFHRILNFLFDYVPKKITGNETRTFHYFIKPKLGKCNVIVQDVYLSPNFLDFKLDHSRNMVYKRLWEDLQLEQNVITNGRKSVDVYAYSTKSMYYPSESTIYPFKLYAKSNEEKTLIIVYRDGKVYRIYDERSTVLKINKPGKYSVKILTYAFSWEGYYFGLRTIAYSAPITLLY.

A helical transmembrane segment spans residues 9–28; the sequence is IILRWVVTLYIYGFILYQIT.

It localises to the membrane. This is an uncharacterized protein from Aquifex aeolicus (strain VF5).